The sequence spans 343 residues: 3-isopropylmalate dehydrogenase (343 aa).

Positions 94, 104, 128, and 218 each coordinate substrate. 3 residues coordinate Mg(2+): D218, D242, and D246. 278-290 (GSAPDIAGQNKAN) lines the NAD(+) pocket.

It belongs to the isocitrate and isopropylmalate dehydrogenases family. LeuB type 2 subfamily. In terms of assembly, homodimer. Mg(2+) serves as cofactor. It depends on Mn(2+) as a cofactor.

Its subcellular location is the cytoplasm. The enzyme catalyses (2R,3S)-3-isopropylmalate + NAD(+) = 4-methyl-2-oxopentanoate + CO2 + NADH. The protein operates within amino-acid biosynthesis; L-leucine biosynthesis; L-leucine from 3-methyl-2-oxobutanoate: step 3/4. In terms of biological role, catalyzes the oxidation of 3-carboxy-2-hydroxy-4-methylpentanoate (3-isopropylmalate) to 3-carboxy-4-methyl-2-oxopentanoate. The product decarboxylates to 4-methyl-2 oxopentanoate. This chain is 3-isopropylmalate dehydrogenase, found in Bifidobacterium longum (strain DJO10A).